Here is a 462-residue protein sequence, read N- to C-terminus: Centrosomal protein of 55 kDa (462 aa).

The segment covering 1-11 has biased composition (basic and acidic residues); it reads MSSRSPKDLIK. The disordered stretch occupies residues 1–25; sequence MSSRSPKDLIKSKWGSRPSSSKSDT. The span at 12-23 shows a compositional bias: low complexity; sequence SKWGSRPSSSKS. 2 coiled-coil regions span residues 50-185 and 228-400; these read KVAN…QQWL and YLQE…KQLH. Phosphoserine occurs at positions 96 and 99. Residues 157 to 235 are interaction with TSG101; it reads ANCFNSSMNS…EGYLQEEKQK (79 aa). Positions 160-214 are interaction with PDCD6IP; the sequence is FNSSMNSIHEKEMQLKDALEKNQQWLVYDQQREAYVKGLLAKIFELEKRTETAAA. Positions 354-462 are required for localization to the interphase centrosome and to the midbody during cytokinesis; sequence QMQACTLDFE…LLVHVEYCMK (109 aa). A phosphoserine mark is found at Ser423 and Ser426. Thr428 is subject to Phosphothreonine. A Phosphoserine; by PLK1 modification is found at Ser434.

In terms of assembly, homodimer. Interacts (phosphorylated on Ser-423 and Ser-426) with PLK1; the interaction is indirect via the MTMR3:MTMR4 heterooligomer, occurs during early mitosis, regulates the phosphorylation of CEP55 by PLK1 and its recruitment to the midbody where it can mediate cell abscission. Interacts with AKAP9/CG-NAP; the interaction occurs in interphase and is lost upon mitotic entry. Interacts with PCNT/Kendrin; the interaction occurs in interphase and is lost upon mitotic entry. Directly interacts with PDCD6IP; this interaction is required for PDCD6IP targeting to the midbody; CEP55 binds PDCD6IP in a 2:1 stoichiometry; PDCD6IP competes with TSG101 for the same binding site. Interacts with TSG101; TSG101 competes with PDCD6IP for the same binding site; interaction is required for cytokinesis. Interacts with MVB12A, VPS37B, VPS37C and VPS28. Post-translationally, there is a hierachy of phosphorylation, where both Ser-423 and Ser-426 are phosphorylated at the onset of mitosis, prior to Ser-434. Phosphorylation at Ser-423 and Ser-426 is required for dissociation from the centrosome at the G2/M boundary. Phosphorylation at the 3 sites, Ser-423, Ser-426 and Ser-434, is required for protein function at the final stages of cell division to complete cytokinesis successfully.

The protein resides in the cytoplasm. It is found in the cytoskeleton. Its subcellular location is the microtubule organizing center. The protein localises to the centrosome. It localises to the centriole. The protein resides in the cleavage furrow. It is found in the midbody. Its subcellular location is the midbody ring. Plays a role in mitotic exit and cytokinesis. Recruits PDCD6IP and TSG101 to midbody during cytokinesis. Required for successful completion of cytokinesis. Not required for microtubule nucleation. Plays a role in the development of the brain and kidney. This chain is Centrosomal protein of 55 kDa, found in Rattus norvegicus (Rat).